Consider the following 78-residue polypeptide: Omega-conotoxin-like VnMKLT1-0111 (78 aa).

The N-terminal stretch at 1 to 22 is a signal peptide; sequence MKLTCMMIVAVLFLTAWTFVTA. Positions 23-48 are excised as a propeptide; it reads DSRNGLEYLFPKAHYEMNPEASKLNK. 3 cysteine pairs are disulfide-bonded: C52-C69, C59-C73, and C68-C77.

Belongs to the conotoxin O1 superfamily. In terms of tissue distribution, expressed by the venom duct.

It localises to the secreted. Omega-conotoxins act at presynaptic membranes, they bind and block voltage-gated calcium channels (Cav). The chain is Omega-conotoxin-like VnMKLT1-0111 from Conus ventricosus (Mediterranean cone).